A 3177-amino-acid polypeptide reads, in one-letter code: Proliferation marker protein Ki-67 (3177 aa).

Residues 27–76 form the FHA domain; the sequence is CLFGRSIECDIRIQLPVVSKRHCKIEVKEQEAILYNFSSTNPTQVNGVTI. 2 stretches are compositionally biased toward basic and acidic residues: residues 98–107 and 116–126; these read EDGNHEDGSK and LGKEPSRRASR. Disordered regions lie at residues 98 to 442 and 473 to 572; these read EDGN…PGLS and RPEL…ASIS. 3 positions are modified to phosphoserine: Ser-125, Ser-128, and Ser-162. Polar residues-rich tracts occupy residues 165–177 and 202–221; these read SDGSKNSVSQDSS and STGSSYREPKSSPTQSLSNS. A compositionally biased stretch (basic and acidic residues) spans 235–263; that stretch reads MKEELDVKSQKSCRKSEPQPDRAAEESRE. Lys-236 is covalently cross-linked (Glycyl lysine isopeptide (Lys-Gly) (interchain with G-Cter in SUMO2)). Residues Ser-250, Ser-276, Ser-277, Ser-286, and Ser-287 each carry the phosphoserine modification. Residues 276 to 286 show a composition bias toward polar residues; sequence SSGSTPVTAAS. Phosphothreonine occurs at positions 307 and 316. Phosphoserine occurs at positions 321, 337, 373, 498, 503, and 588. The tract at residues 455-618 is positively charged patch (CP); it reads KSEGMPMKRR…VKQTQTKVAK (164 aa). Residues 462-509 form the PP1-binding domain; it reads KRRRVSFGGHLRPELFDENLPPNTPLKRGETPTKRKSLGTHSPAVLKT. The interval 614–652 is disordered; the sequence is TKVAKHVPQKQTSKRQRRPSTPKKPTSNLHNQFTTGHAN. Positions 616 to 634 are enriched in basic residues; it reads VAKHVPQKQTSKRQRRPST. The segment covering 636–652 has biased composition (polar residues); that stretch reads KKPTSNLHNQFTTGHAN. At Thr-701 the chain carries Phosphothreonine. Disordered regions lie at residues 793–815, 835–901, and 956–989; these read LEKKTPVSETEPLKTASSVSKLR, VLAE…LGSQ, and KHSPKTPGKKAQPLEGPAGLKEHFETPNPKDKPI. Residues 855–864 show a composition bias toward polar residues; sequence DQQVQDNENA. Basic and acidic residues-rich tracts occupy residues 867-882 and 975-989; these read RCKESGELSEGSEKTS and LKEHFETPNPKDKPI. 16 K167R repeats span residues 994–1101, 1108–1216, 1228–1336, 1348–1450, 1461–1569, 1582–1684, 1696–1806, 1817–1925, 1937–2046, 2059–2163, 2175–2284, 2296–2405, 2419–2526, 2537–2639, 2643–2748, and 2762–2870; these read TRVL…FISP, KKIP…FQTP, SAKI…FQTP, SAKM…FQIP, KTKK…FQMP, TMLA…LFQT, KQTR…FQTP, ETTK…FQTP, VKMS…FQTP, SAKM…FQTP, SAKI…VFQT, AKLP…CQAP, KTPK…SFQE, KRIS…PIQT, and TQMP…ITQI. Glycyl lysine isopeptide (Lys-Gly) (interchain with G-Cter in SUMO2) cross-links involve residues Lys-1013 and Lys-1026. A Phosphoserine modification is found at Ser-1062. Lys-1082 participates in a covalent cross-link: Glycyl lysine isopeptide (Lys-Gly) (interchain with G-Cter in SUMO1); alternate. Residue Lys-1082 forms a Glycyl lysine isopeptide (Lys-Gly) (interchain with G-Cter in SUMO2); alternate linkage. Disordered regions lie at residues 1109–1321 and 1334–1410; these read KIPS…IRAQ and QTPA…ENDC. At Ser-1114 the chain carries Phosphoserine. Polar residues predominate over residues 1114–1127; the sequence is SPHTQPVRTPASTK. Phosphothreonine is present on Thr-1122. A Phosphoserine modification is found at Ser-1125. Thr-1150 is subject to Phosphothreonine. Ser-1152 carries the post-translational modification Phosphoserine. Residues Thr-1159 and Thr-1175 each carry the phosphothreonine modification. Ser-1189 is modified (phosphoserine). Thr-1215 is subject to Phosphothreonine. The residue at position 1235 (Ser-1235) is a Phosphoserine. Thr-1243, Thr-1279, Thr-1295, Thr-1307, and Thr-1315 each carry phosphothreonine. Residues 1308 to 1317 are compositionally biased toward basic residues; that stretch reads GHKRRPRTPK. Residue Lys-1317 forms a Glycyl lysine isopeptide (Lys-Gly) (interchain with G-Cter in SUMO2) linkage. Residue Thr-1335 is modified to Phosphothreonine. A compositionally biased stretch (polar residues) spans 1353 to 1368; sequence LESSQAEPVKTPASTK. The residue at position 1356 (Ser-1356) is a Phosphoserine. Residue Thr-1363 is modified to Phosphothreonine. At Ser-1366 the chain carries Phosphoserine. Basic and acidic residues predominate over residues 1371–1384; the sequence is SKTDLSKVDVREDP. Phosphothreonine is present on residues Thr-1400 and Thr-1416. At Ser-1469 the chain carries Phosphoserine. At Thr-1477 the chain carries Phosphothreonine. A Phosphoserine modification is found at Ser-1480. At Thr-1513 the chain carries Phosphothreonine. Positions 1526–1550 are disordered; sequence RKPAKRKLDSTAGMPNSKRMRCSSK. 2 positions are modified to phosphoserine: Ser-1542 and Ser-1587. Lys-1609 is modified (N6-acetyllysine). Lys-1668 is covalently cross-linked (Glycyl lysine isopeptide (Lys-Gly) (interchain with G-Cter in SUMO2)). A phosphothreonine mark is found at Thr-1684 and Thr-1712. Ser-1734 is subject to Phosphoserine. A disordered region spans residues 1749–1797; the sequence is IPIGPEDDTENKGVKESTPQTLDSSASRTVSKRQQGAHEERPQFSGDLF. The span at 1765 to 1782 shows a compositional bias: polar residues; sequence STPQTLDSSASRTVSKRQ. Thr-1766 is subject to Phosphothreonine. A Phosphoserine modification is found at Ser-1779. Thr-1805 carries the post-translational modification Phosphothreonine. Phosphoserine is present on Ser-1825. Residues Thr-1859, Thr-1868, Thr-1884, and Thr-1924 each carry the phosphothreonine modification. Residues 1925 to 2033 form a disordered region; sequence PAGASDPVSV…QTPKIRAQPL (109 aa). The residue at position 1944 (Ser-1944) is a Phosphoserine. Lys-1966 is subject to N6-acetyllysine. Phosphothreonine is present on residues Thr-1989, Thr-2005, and Thr-2025. Lys-2027 participates in a covalent cross-link: Glycyl lysine isopeptide (Lys-Gly) (interchain with G-Cter in SUMO1); alternate. Lys-2027 participates in a covalent cross-link: Glycyl lysine isopeptide (Lys-Gly) (interchain with G-Cter in SUMO2); alternate. A Phosphothreonine modification is found at Thr-2045. Residues 2047 to 2112 form a disordered region; the sequence is AGANDSVTVE…SPGTPAPVQE (66 aa). Residues 2063–2078 are compositionally biased toward polar residues; that stretch reads LESSQAEPVKTPASTK. At Ser-2065 the chain carries Phosphoserine. At Thr-2073 the chain carries Phosphothreonine. 3 positions are modified to phosphoserine: Ser-2076, Ser-2095, and Ser-2103. The span at 2088–2101 shows a compositional bias: basic and acidic residues; it reads VDVREDPSILEKKT. Thr-2106 and Thr-2122 each carry phosphothreonine. The disordered stretch occupies residues 2124-2343; it reads KQKLDFTGNS…PLSKSSCASQ (220 aa). Over residues 2135-2144 the composition is skewed to basic residues; it reads GHKRRPRTPK. Thr-2162 is subject to Phosphothreonine. A compositionally biased stretch (polar residues) spans 2180-2195; sequence LESSQAKPVKTPASTK. Ser-2182 is modified (phosphoserine). Thr-2190 is modified (phosphothreonine). Ser-2198 bears the Phosphoserine mark. At Thr-2218 the chain carries Phosphothreonine. Phosphoserine is present on Ser-2220. Thr-2227, Thr-2243, and Thr-2283 each carry phosphothreonine. Position 2303 is a phosphoserine (Ser-2303). 2 positions are modified to phosphothreonine: Thr-2311 and Thr-2348. Positions 2378–2390 are enriched in basic residues; it reads RGKRQQRSCKKRS. The disordered stretch occupies residues 2378–2447; it reads RGKRQQRSCK…RRQARTGLRK (70 aa). A phosphoserine mark is found at Ser-2390 and Ser-2392. Phosphothreonine is present on Thr-2405. 2 positions are modified to phosphoserine: Ser-2423 and Ser-2425. Residue Lys-2451 forms a Glycyl lysine isopeptide (Lys-Gly) (interchain with G-Cter in SUMO1) linkage. 4 positions are modified to phosphoserine: Ser-2464, Ser-2487, Ser-2545, and Ser-2592. Over residues 2538–2547 the composition is skewed to basic and acidic residues; it reads TPKMPDKSPE. Disordered regions lie at residues 2538–2828 and 2879–3160; these read TPKM…QVSK and HDTS…DAKT. Positions 2605–2622 are enriched in polar residues; it reads VQKQDPSVSLTGRRNQPR. Ser-2649 carries the post-translational modification Phosphoserine. Composition is skewed to basic and acidic residues over residues 2673-2697 and 2704-2714; these read GVKEEPTAQRKQPSRETRNTLKEPV and EEVKKSTKQKI. Lys-2675 is covalently cross-linked (Glycyl lysine isopeptide (Lys-Gly) (interchain with G-Cter in SUMO1); alternate). Lys-2675 participates in a covalent cross-link: Glycyl lysine isopeptide (Lys-Gly) (interchain with G-Cter in SUMO2); alternate. 2 stretches are compositionally biased toward polar residues: residues 2764 to 2781 and 2883 to 2892; these read MPCNSLQPEQVDSFQSSP and ILKSTQQQKP. 2 positions are modified to phosphoserine: Ser-2768 and Ser-2780. Over residues 2907 to 2923 the composition is skewed to basic and acidic residues; it reads ASKEDPKEVLVDTRDHA. Residue Lys-2909 forms a Glycyl lysine isopeptide (Lys-Gly) (interchain with G-Cter in SUMO2) linkage. An N6-acetyllysine modification is found at Lys-2928. Residues 2959–2971 show a composition bias toward basic and acidic residues; sequence EATDEKPVPEKKR. ATP is bound at residue 2973–2980; sequence ASSKRHVS. Phosphoserine is present on Ser-2980. Positions 3008–3018 are enriched in basic and acidic residues; sequence KTEEMEAKREN. A Phosphothreonine modification is found at Thr-3021. Positions 3039-3057 are enriched in basic and acidic residues; that stretch reads PKFDASAENVGIKKNEKTM. Positions 3058–3067 are enriched in polar residues; that stretch reads KTASQETELQ. The residue at position 3061 (Ser-3061) is a Phosphoserine. Basic and acidic residues-rich tracts occupy residues 3118 to 3132 and 3140 to 3160; these read PQEEKGVSGESDVRC and VALDSEPKPRVTRGTKKDAKT.

In terms of assembly, interacts with KIF15. Interacts (via the FHA domain) with NIFK. Interacts with PPP1CC. Component of a complex at least composed of ZNF335, HCFC1, CCAR2, EMSY, MKI67, RBBP5, ASH2L and WDR5; the complex is formed as a result of interactions between components of a nuclear receptor-mediated transcription complex and a histone methylation complex. Interacts with ZNF335. In terms of processing, hyperphosphorylated by CDK1 in mitosis; hyperphosphorylatiom prevents undergoing liquid-liquid phase separation. Dephosphorylated by PPP1CC at the onset of anaphase. Dephosphorylation by protein phosphatase 2A (PP2A) and simultaneous exposure of the positively charged patch (CP) during mitotic exit induce the RNA-dependent formation of a liquid-like condensed phase on the chromosome surface. Ubiquitinated by the APC/C complex after neuronal progenitors exit mitosis during brain development, leading to clearance from constitutive heterochromatin. In terms of tissue distribution, mainly present in proliferating cells (at protein level).

It localises to the chromosome. Its subcellular location is the nucleus. The protein resides in the nucleolus. Its function is as follows. Protein that associates with the surface of mitotic chromosomes and acts both as a chromosome repellent during early mitosis and chromosome attractant during late mitosis. Required to maintain individual mitotic chromosomes dispersed in the cytoplasm following nuclear envelope disassembly. During early mitosis, relocalizes from nucleoli to the chromosome surface where it forms extended brush structures that cover a substantial fraction of the chromosome surface. The MKI67 brush structure prevents chromosomes from collapsing into a single chromatin mass by forming a steric and electrostatic charge barrier: the protein has a high net electrical charge and acts as a surfactant, dispersing chromosomes and enabling independent chromosome motility. During mitotic anaphase, the MKI67 brush structure collapses and MKI67 switches from a chromosome repellent to a chromosome attractant to promote chromosome clustering and facilitate the exclusion of large cytoplasmic particles from the future nuclear space. Mechanistically, dephosphorylation during mitotic exit and simultaneous exposure of a conserved basic patch induce the RNA-dependent formation of a liquid-like condensed phase on the chromosome surface, promoting coalescence of neighboring chromosome surfaces and clustering of chromosomes. Binds premature ribosomal RNAs during anaphase; promoting liquid-liquid phase separation. Binds DNA, with a preference for supercoiled DNA and AT-rich DNA. Does not contribute to the internal structure of mitotic chromosomes. May play a role in chromatin organization; it is however unclear whether it plays a direct role in chromatin organization or whether it is an indirect consequence of its function in mitotic chromosome. This is Proliferation marker protein Ki-67 from Mus musculus (Mouse).